We begin with the raw amino-acid sequence, 312 residues long: Porphobilinogen deaminase (312 aa).

The residue at position 241 (C241) is an S-(dipyrrolylmethanemethyl)cysteine.

Belongs to the HMBS family. As to quaternary structure, monomer. The cofactor is dipyrromethane.

It carries out the reaction 4 porphobilinogen + H2O = hydroxymethylbilane + 4 NH4(+). Its pathway is porphyrin-containing compound metabolism; protoporphyrin-IX biosynthesis; coproporphyrinogen-III from 5-aminolevulinate: step 2/4. In terms of biological role, tetrapolymerization of the monopyrrole PBG into the hydroxymethylbilane pre-uroporphyrinogen in several discrete steps. The chain is Porphobilinogen deaminase from Cytophaga hutchinsonii (strain ATCC 33406 / DSM 1761 / CIP 103989 / NBRC 15051 / NCIMB 9469 / D465).